The sequence spans 282 residues: Pantothenate synthetase (282 aa).

30–37 is an ATP binding site; it reads MGNLHLGH. The Proton donor role is filled by His37. Position 61 (Gln61) interacts with (R)-pantoate. Gln61 contacts beta-alanine. 149–152 is a binding site for ATP; sequence GQKD. Gln155 contributes to the (R)-pantoate binding site. ATP-binding positions include Ile178 and 186–189; that span reads MSSR.

This sequence belongs to the pantothenate synthetase family. In terms of assembly, homodimer.

The protein localises to the cytoplasm. It carries out the reaction (R)-pantoate + beta-alanine + ATP = (R)-pantothenate + AMP + diphosphate + H(+). It participates in cofactor biosynthesis; (R)-pantothenate biosynthesis; (R)-pantothenate from (R)-pantoate and beta-alanine: step 1/1. Its function is as follows. Catalyzes the condensation of pantoate with beta-alanine in an ATP-dependent reaction via a pantoyl-adenylate intermediate. This Shewanella piezotolerans (strain WP3 / JCM 13877) protein is Pantothenate synthetase.